Consider the following 233-residue polypeptide: Cysteine-rich venom protein (233 aa).

Residues 1-12 form the signal peptide; that stretch reads PILAAVLQQSSG. One can recognise an SCP domain in the interval 31-159; the sequence is VDLHNSLRRS…PYSYFFVCQY (129 aa). 8 disulfide bridges follow: C68–C146, C85–C160, C141–C157, C179–C186, C182–C191, C195–C228, C204–C222, and C213–C226. Residues 195–228 form the ShKT domain; it reads CTRENKFTNCNTMVQQSSCQDNYMKTNCPASCFC.

The protein belongs to the CRISP family. In terms of tissue distribution, expressed by the venom gland.

The protein resides in the secreted. Blocks contraction of smooth muscle elicited by high potassium-induced depolarization, but does not block caffeine-stimulated contraction. May target voltage-gated calcium channels on smooth muscle. The sequence is that of Cysteine-rich venom protein from Trimeresurus stejnegeri (Chinese green tree viper).